Here is a 90-residue protein sequence, read N- to C-terminus: MANHKSAQKRIRQTKTRTERNRYYKTRIKNIVRDLREAVLNKDVAKAQEALKIANKELHKYVSKGILKKNTAARKVSRLNASVKKIAQSA.

A compositionally biased stretch (basic residues) spans 1–15 (MANHKSAQKRIRQTK). Residues 1–22 (MANHKSAQKRIRQTKTRTERNR) form a disordered region.

Belongs to the bacterial ribosomal protein bS20 family.

Its function is as follows. Binds directly to 16S ribosomal RNA. This is Small ribosomal subunit protein bS20 from Helicobacter hepaticus (strain ATCC 51449 / 3B1).